The chain runs to 221 residues: Putative adhesin P1-like protein MPN_131 (221 aa).

The span at 13 to 36 shows a compositional bias: low complexity; the sequence is RYGNNHRGSNSSTSGVTTQGQSQN. Disordered regions lie at residues 13–51 and 90–183; these read RYGN…NVGV and GWRN…TPSG. Residues 37–48 show a composition bias toward polar residues; sequence ASSNEPAPTFSN. Residues 130–139 show a composition bias toward basic and acidic residues; the sequence is LKQDKADKSG. 2 stretches are compositionally biased toward polar residues: residues 149 to 160 and 174 to 183; these read SGDNLTNYTNLP and HSPTRTTPSG.

This sequence belongs to the adhesin P1 family.

The polypeptide is Putative adhesin P1-like protein MPN_131 (Mycoplasma pneumoniae (strain ATCC 29342 / M129 / Subtype 1) (Mycoplasmoides pneumoniae)).